The chain runs to 228 residues: Cytochrome c oxidase subunit 2 (228 aa).

At 1–26 (MATWANLGLQDSSSPLMEQLNFFHDH) the chain is on the mitochondrial intermembrane side. A helical transmembrane segment spans residues 27–48 (TLLILTMITILVGYIMGMLSFN). The Mitochondrial matrix portion of the chain corresponds to 49-62 (KFTNRFLLHGQTIE). Residues 63–82 (IIWTVLPAIILMFIAFPSLR) traverse the membrane as a helical segment. At 83–228 (LLYLMDEINT…FIKWITSMTN (146 aa)) the chain is on the mitochondrial intermembrane side. Positions 161, 196, 198, 200, 204, and 207 each coordinate Cu cation. E198 is a binding site for Mg(2+).

This sequence belongs to the cytochrome c oxidase subunit 2 family. In terms of assembly, component of the cytochrome c oxidase (complex IV, CIV), a multisubunit enzyme composed of a catalytic core of 3 subunits and several supernumerary subunits. The complex exists as a monomer or a dimer and forms supercomplexes (SCs) in the inner mitochondrial membrane with ubiquinol-cytochrome c oxidoreductase (cytochrome b-c1 complex, complex III, CIII). Requires Cu cation as cofactor.

Its subcellular location is the mitochondrion inner membrane. It carries out the reaction 4 Fe(II)-[cytochrome c] + O2 + 8 H(+)(in) = 4 Fe(III)-[cytochrome c] + 2 H2O + 4 H(+)(out). Its function is as follows. Component of the cytochrome c oxidase, the last enzyme in the mitochondrial electron transport chain which drives oxidative phosphorylation. The respiratory chain contains 3 multisubunit complexes succinate dehydrogenase (complex II, CII), ubiquinol-cytochrome c oxidoreductase (cytochrome b-c1 complex, complex III, CIII) and cytochrome c oxidase (complex IV, CIV), that cooperate to transfer electrons derived from NADH and succinate to molecular oxygen, creating an electrochemical gradient over the inner membrane that drives transmembrane transport and the ATP synthase. Cytochrome c oxidase is the component of the respiratory chain that catalyzes the reduction of oxygen to water. Electrons originating from reduced cytochrome c in the intermembrane space (IMS) are transferred via the dinuclear copper A center (CU(A)) of subunit 2 and heme A of subunit 1 to the active site in subunit 1, a binuclear center (BNC) formed by heme A3 and copper B (CU(B)). The BNC reduces molecular oxygen to 2 water molecules using 4 electrons from cytochrome c in the IMS and 4 protons from the mitochondrial matrix. The polypeptide is Cytochrome c oxidase subunit 2 (COII) (Anopheles gambiae (African malaria mosquito)).